The chain runs to 237 residues: 4'-phosphopantetheinyl transferase gsp (237 aa).

Residues D106, E108, and E150 each contribute to the Mg(2+) site.

Belongs to the P-Pant transferase superfamily. Gsp/Sfp/HetI/AcpT family. Requires Mg(2+) as cofactor.

The catalysed reaction is apo-[peptidyl-carrier protein] + CoA = holo-[peptidyl-carrier protein] + adenosine 3',5'-bisphosphate + H(+). Functionally, activates the five peptidyl carrier protein (PCP) domains of gramicidin synthase GrsAB, by transferring the 4'-phosphopantetheinyl moiety of coenzyme A (CoA) to a serine residue. Required for gramicidin S production. In Aneurinibacillus migulanus (Bacillus migulanus), this protein is 4'-phosphopantetheinyl transferase gsp (gsp).